The following is a 435-amino-acid chain: Serine--tRNA ligase (435 aa).

A disordered region spans residues 48-68 (MKAQRNEASKKIGEAKRNGES). Residues 49–68 (KAQRNEASKKIGEAKRNGES) show a composition bias toward basic and acidic residues. 230-232 (TAE) provides a ligand contact to L-serine. 261–263 (RSE) serves as a coordination point for ATP. L-serine is bound at residue E284. 348–351 (EVSS) is an ATP binding site. S383 is an L-serine binding site.

It belongs to the class-II aminoacyl-tRNA synthetase family. Type-1 seryl-tRNA synthetase subfamily. In terms of assembly, homodimer. The tRNA molecule binds across the dimer.

Its subcellular location is the cytoplasm. It carries out the reaction tRNA(Ser) + L-serine + ATP = L-seryl-tRNA(Ser) + AMP + diphosphate + H(+). It catalyses the reaction tRNA(Sec) + L-serine + ATP = L-seryl-tRNA(Sec) + AMP + diphosphate + H(+). It participates in aminoacyl-tRNA biosynthesis; selenocysteinyl-tRNA(Sec) biosynthesis; L-seryl-tRNA(Sec) from L-serine and tRNA(Sec): step 1/1. Catalyzes the attachment of serine to tRNA(Ser). Is also able to aminoacylate tRNA(Sec) with serine, to form the misacylated tRNA L-seryl-tRNA(Sec), which will be further converted into selenocysteinyl-tRNA(Sec). The sequence is that of Serine--tRNA ligase from Limosilactobacillus reuteri (strain DSM 20016) (Lactobacillus reuteri).